We begin with the raw amino-acid sequence, 538 residues long: Calcium-dependent protein kinase 3 (538 aa).

Residues 23 to 70 (PKKSIERIKKKKDSNKSIKSQHKFEGSKISNKNNELKDVKSKDPKNYE) are disordered. A compositionally biased stretch (basic and acidic residues) spans 56–68 (NELKDVKSKDPKN). The Protein kinase domain maps to 112–367 (NLSEEPLGKG…ASEALKHPWF (256 aa)). Residues 118-126 (LGKGTYGCV) and Lys141 contribute to the ATP site. Asp232 functions as the Proton acceptor in the catalytic mechanism. The J domain autoinhibitory motif signature appears at 387–395 (NFKNYALLL). Positions 387–422 (NFKNYALLLKLQKLAMTIIAQQSNDYDLQQLKAVFL) are j domain. A J domain EF-hand interaction motif motif is present at residues 396-405 (KLQKLAMTII). 3 EF-hand domains span residues 412 to 447 (YDLQ…SGLK), 450 to 481 (QNFD…DRKH), and 482 to 517 (LSKK…VILF). Residues Asp460, Asp462, Ser464, Arg466, Glu471, Asp495, Asp497, Asp499, Glu501, and Glu506 each contribute to the Ca(2+) site.

This sequence belongs to the protein kinase superfamily. Ser/Thr protein kinase family. CDPK subfamily. Mg(2+) is required as a cofactor.

Its subcellular location is the cytoplasm. The catalysed reaction is L-seryl-[protein] + ATP = O-phospho-L-seryl-[protein] + ADP + H(+). It carries out the reaction L-threonyl-[protein] + ATP = O-phospho-L-threonyl-[protein] + ADP + H(+). With respect to regulation, activated by calcium. Upon calcium binding to the EF-hand domain 2, the C-terminus of the junction domain (J domain) undergoes a conformational change which results in the dissociation of the pseudo-substrate inhibitory motif from the catalytic domain. This, in turn, may facilitate the autophosphorylation of the activation loop at Thr-273, which leads to the kinase activation. In terms of biological role, calcium-dependent protein kinase which acts as a sensor and effector of intracellular Ca(2+) levels probably in part downstream of cGMP-activated PKG kinase. In the mosquito midgut, regulates the gliding motility of the ookinete which is essential for the ookinete to invade the midgut epithelium. However, another study showed that while required for ookinete invasion of the midgut epithelium, is not required for ookinete gliding motility. In Plasmodium yoelii yoelii, this protein is Calcium-dependent protein kinase 3.